The sequence spans 163 residues: uncharacterized protein (163 aa).

The Cytoplasmic portion of the chain corresponds to Met-1 to Thr-33. A helical membrane pass occupies residues Cys-34–Phe-54. Over Glu-55–Asp-117 the chain is Extracellular. The helical transmembrane segment at Val-118–Phe-138 threads the bilayer. Residues Glu-139–Leu-163 are Cytoplasmic-facing.

It is found in the membrane. This is an uncharacterized protein from Saccharomyces cerevisiae (strain ATCC 204508 / S288c) (Baker's yeast).